The following is a 1088-amino-acid chain: Neural cell adhesion molecule 1-A (1088 aa).

The signal sequence occupies residues 1-19 (MLHIKDLIWTLYFIGTAVA). Ig-like C2-type domains follow at residues 20–108 (LEVN…GTVN), 113–202 (QKLT…KDIQ), 209–294 (PTIQ…AEAT), 303–397 (PKIT…FEVQ), and 400–484 (PKIR…HEFS). Residues 20-705 (LEVNIVPDQG…TASAGTGLGT (686 aa)) are Extracellular-facing. Cystine bridges form between cysteine 41–cysteine 93 and cysteine 136–cysteine 186. Residue asparagine 82 is glycosylated (N-linked (GlcNAc...) asparagine). Heparin contacts are provided by residues 149–153 (RHKGK) and 158–162 (KKDVR). A glycan (N-linked (GlcNAc...) asparagine) is linked at asparagine 219. A disulfide bridge connects residues cysteine 232 and cysteine 282. Residues asparagine 310, asparagine 341, asparagine 417, asparagine 443, and asparagine 472 are each glycosylated (N-linked (GlcNAc...) asparagine). Cysteine 323 and cysteine 379 are oxidised to a cystine. A disulfide bridge connects residues cysteine 420 and cysteine 473. Fibronectin type-III domains follow at residues 493–592 (TPSS…TQPV) and 594–690 (EPSA…TAKP). A helical transmembrane segment spans residues 706–723 (GAIVGILIVIFVLLLVVV). The Cytoplasmic portion of the chain corresponds to 724–1088 (DVTCFFLNKC…TQTNANESKA (365 aa)). Basic and acidic residues predominate over residues 758 to 784 (EGKAAFSKDESKEPIVEVRTEEERTPN). Disordered regions lie at residues 758-802 (EGKA…LTEP), 829-1000 (FATA…DGGT), and 1024-1088 (VASG…ESKA). 3 stretches are compositionally biased toward low complexity: residues 835-847 (SPTS…TSST), 854-875 (APDS…APTT), and 913-936 (PSAA…VPPN). Residues 965 to 974 (QPSTVKNPTE) show a composition bias toward polar residues. Residues 1046 to 1064 (AKTEKTQVEEKSKPEEIDV) show a composition bias toward basic and acidic residues. Over residues 1076 to 1088 (NEATQTNANESKA) the composition is skewed to polar residues.

Post-translationally, polysialylated by ST8SIA2 and ST8SIA4. Polysialylation modulates cell interactions by confering both attractive and repulsive properties that are highly regulated by ST8SIA2 and ST8SIA4. Polysialylation is formed on a-2,3-linked sialic acid of core glycans. As to expression, expressed in neuron and in presumptive neural tissue.

It is found in the cell membrane. Its function is as follows. This protein is a cell adhesion molecule involved in neuron-neuron adhesion, neurite fasciculation, outgrowth of neurites, etc. This Xenopus laevis (African clawed frog) protein is Neural cell adhesion molecule 1-A.